A 151-amino-acid chain; its full sequence is Ribosome maturation factor RimP (151 aa).

The protein belongs to the RimP family.

Its subcellular location is the cytoplasm. Required for maturation of 30S ribosomal subunits. The polypeptide is Ribosome maturation factor RimP (Colwellia psychrerythraea (strain 34H / ATCC BAA-681) (Vibrio psychroerythus)).